A 168-amino-acid chain; its full sequence is Probable chemoreceptor glutamine deamidase CheD (168 aa).

The protein belongs to the CheD family.

It carries out the reaction L-glutaminyl-[protein] + H2O = L-glutamyl-[protein] + NH4(+). Functionally, probably deamidates glutamine residues to glutamate on methyl-accepting chemotaxis receptors (MCPs), playing an important role in chemotaxis. The sequence is that of Probable chemoreceptor glutamine deamidase CheD from Pseudomonas syringae pv. tomato (strain ATCC BAA-871 / DC3000).